The sequence spans 734 residues: Monosaccharide-sensing protein 1 (734 aa).

6 helical membrane-spanning segments follow: residues 6–26, 44–64, 79–99, 102–122, 133–153, and 163–183; these read LVALAATIGNFLQGWDNATIA, GLVVAMSLIGATVITTCSGPI, VMYFVCGLIMLWSPNVYVLCF, LLNGFGAGLAVTLVPVYISET, TLPQFLGSGGMFLSYCMVFTM, and AMLGVLSIPSLLYLFLTVFYL. A disordered region spans residues 351–403; that stretch reads YNKDNDDYATDDGAGDDDDSDNDLRSPLMSRQTTSMDKDMIPHPTSGSTLSMR. A compositionally biased stretch (acidic residues) spans 357-371; that stretch reads DYATDDGAGDDDDSD. Residues S446 and S480 each carry the phosphoserine modification. The next 6 helical transmembrane spans lie at 510–530, 556–576, 588–608, 621–641, 653–673, and 680–700; these read ALVVGVGIQILQQFSGINGVL, ASFLISGLTTLLMLPAIVVAM, LLWTIPVLIVSLVVLVISELI, GCVVLYFCFFVMGYGPIPNIL, LCIAICAMVFWIGDIIVTYSL, and IGLVGVFSIYAAVCVISWIFV.

Belongs to the major facilitator superfamily. Sugar transporter (TC 2.A.1.1) family. In terms of assembly, binds to VIK at the tonoplast. Phosphorylated by VIK; this activation promotes carrier activity. As to expression, mostly expressed in juvenile and adult leaves, to a lower extent, in flower tissues, and, at low levels, in roots and stems.

Its subcellular location is the vacuole membrane. The enzyme catalyses D-glucose(out) + H(+)(in) = D-glucose(in) + H(+)(out). The catalysed reaction is sucrose(out) + H(+)(in) = sucrose(in) + H(+)(out). With respect to regulation, enhanced activation by VIK-mediated phosphorylation promoting carrier activity and consequently vacuolar sugar accumulation. Sugar proton-coupled antiporter which contributes to vacuolar sugar import (e.g. monosaccharides including glucose, sucrose and fructose), particularly during stress responses (e.g. in response to cold). Required for cytosolic glucose homeostasis. This chain is Monosaccharide-sensing protein 1, found in Arabidopsis thaliana (Mouse-ear cress).